Consider the following 277-residue polypeptide: Large ribosomal subunit protein uL2 (277 aa).

The tract at residues 215-263 (LGRKPHQRGSAMNPVDHPHGGGEGRTGAGRVPVSPWGQPAKGLKTRKKR) is disordered.

This sequence belongs to the universal ribosomal protein uL2 family. Part of the 50S ribosomal subunit. Forms a bridge to the 30S subunit in the 70S ribosome.

Its function is as follows. One of the primary rRNA binding proteins. Required for association of the 30S and 50S subunits to form the 70S ribosome, for tRNA binding and peptide bond formation. It has been suggested to have peptidyltransferase activity; this is somewhat controversial. Makes several contacts with the 16S rRNA in the 70S ribosome. In Deinococcus geothermalis (strain DSM 11300 / CIP 105573 / AG-3a), this protein is Large ribosomal subunit protein uL2.